The primary structure comprises 196 residues: Inosine triphosphate pyrophosphatase 1 (196 aa).

20–25 (TGNDGK) serves as a coordination point for ITP. Glu48 contacts Mg(2+). ITP-binding positions include Lys61, 77–78 (DT), Lys94, 153–156 (FGWD), Lys177, and 182–183 (PR).

The protein belongs to the HAM1 NTPase family. In terms of assembly, homodimer. Mg(2+) is required as a cofactor. It depends on Mn(2+) as a cofactor.

The protein localises to the cytoplasm. The enzyme catalyses ITP + H2O = IMP + diphosphate + H(+). It carries out the reaction dITP + H2O = dIMP + diphosphate + H(+). The catalysed reaction is XTP + H2O = XMP + diphosphate + H(+). Pyrophosphatase that hydrolyzes non-canonical purine nucleotides such as inosine triphosphate (ITP), deoxyinosine triphosphate (dITP) or xanthosine 5'-triphosphate (XTP) to their respective monophosphate derivatives. The enzyme does not distinguish between the deoxy- and ribose forms. Probably excludes non-canonical purines from RNA and DNA precursor pools, thus preventing their incorporation into RNA and DNA and avoiding chromosomal lesions. In Trypanosoma cruzi (strain CL Brener), this protein is Inosine triphosphate pyrophosphatase 1.